We begin with the raw amino-acid sequence, 919 residues long: WD repeat-containing protein 47 (919 aa).

In terms of domain architecture, LisH spans 10–42; it reads KEVEIIKLILDFLNSKKLHISMLALEKESGVIN. In terms of domain architecture, CTLH spans 45–102; the sequence is FSDDMLFLRQLILDGQWDEVLQFIQPLECMEKFDKKRFRYIILKQKFLEALCVNNAMS. Threonine 285 is modified (phosphothreonine). Phosphoserine is present on residues serine 289, serine 292, serine 297, and serine 312. The segment at 393–421 is disordered; the sequence is GQSSVSEKEPANGAQNPGPAKQEKNELRD. Position 422 is a phosphoserine (serine 422). The disordered stretch occupies residues 500 to 590; it reads LNQQCNGSKG…SLSRSKGEED (91 aa). Polar residues predominate over residues 517 to 551; that stretch reads VTSFTTPPQDSSQRLTHDASNIHTSTPRNPGSTNH. Threonine 542 bears the Phosphothreonine mark. 7 WD repeats span residues 604-643, 659-698, 706-748, 753-791, 798-837, 840-879, and 886-918; these read EDTQ…DPSA, HHKG…CNAT, MHDG…GQGL, GHTG…CVRV, GTGS…MVQS, PHSS…TKQL, and EHKD…WTYN.

Interacts with MAP1S (via WD repeats).

The protein localises to the cytoplasm. It localises to the cytoskeleton. This is WD repeat-containing protein 47 (WDR47) from Homo sapiens (Human).